The chain runs to 429 residues: UDP-N-acetylglucosamine 1-carboxyvinyltransferase (429 aa).

22–23 (KN) is a binding site for phosphoenolpyruvate. Position 102 (Arg102) interacts with UDP-N-acetyl-alpha-D-glucosamine. Residue Cys126 is the Proton donor of the active site. 2-(S-cysteinyl)pyruvic acid O-phosphothioketal is present on Cys126. UDP-N-acetyl-alpha-D-glucosamine contacts are provided by residues 131 to 135 (RPVDL), Asp316, and Ile338.

The protein belongs to the EPSP synthase family. MurA subfamily.

Its subcellular location is the cytoplasm. The enzyme catalyses phosphoenolpyruvate + UDP-N-acetyl-alpha-D-glucosamine = UDP-N-acetyl-3-O-(1-carboxyvinyl)-alpha-D-glucosamine + phosphate. The protein operates within cell wall biogenesis; peptidoglycan biosynthesis. Its function is as follows. Cell wall formation. Adds enolpyruvyl to UDP-N-acetylglucosamine. The chain is UDP-N-acetylglucosamine 1-carboxyvinyltransferase from Rhodopseudomonas palustris (strain BisA53).